An 840-amino-acid chain; its full sequence is Subtilisin-like protease SBT2.3 (840 aa).

A signal peptide spans 1–27 (MVRVMLVRFGFLLLMISFVFLSNNTLG). The propeptide at 28 to 146 (QQQDDDDDSA…IVLDYSVRTA (119 aa)) is activation peptide. The Inhibitor I9 domain occupies 38–146 (VYIVTLKQPP…IVLDYSVRTA (109 aa)). The segment covering 61 to 81 (KSKFTPKLRPRNNSRKRHGKS) has biased composition (basic residues). Positions 61 to 85 (KSKFTPKLRPRNNSRKRHGKSKIPS) are disordered. Asparagine 72 is a glycosylation site (N-linked (GlcNAc...) asparagine). Positions 148–694 (TYTPQFMGLP…SGFVNATAAL (547 aa)) constitute a Peptidase S8 domain. The Charge relay system role is filled by aspartate 180. 2 N-linked (GlcNAc...) asparagine glycosylation sites follow: asparagine 193 and asparagine 241. Catalysis depends on histidine 255, which acts as the Charge relay system. N-linked (GlcNAc...) asparagine glycosylation is found at asparagine 398, asparagine 427, asparagine 480, asparagine 525, and asparagine 553. Positions 418-513 (MISAFHALNN…MDMPGIIIPS (96 aa)) constitute a PA domain. The active-site Charge relay system is the serine 619. Residues asparagine 689, asparagine 715, asparagine 723, asparagine 767, and asparagine 808 are each glycosylated (N-linked (GlcNAc...) asparagine).

This sequence belongs to the peptidase S8 family.

The protein resides in the secreted. This chain is Subtilisin-like protease SBT2.3, found in Arabidopsis thaliana (Mouse-ear cress).